A 305-amino-acid polypeptide reads, in one-letter code: tRNA-splicing endonuclease (305 aa).

Catalysis depends on residues Tyr246, His257, and Lys287.

It belongs to the tRNA-intron endonuclease family. Archaeal long subfamily. Homodimer.

The catalysed reaction is pretRNA = a 3'-half-tRNA molecule with a 5'-OH end + a 5'-half-tRNA molecule with a 2',3'-cyclic phosphate end + an intron with a 2',3'-cyclic phosphate and a 5'-hydroxyl terminus.. Functionally, endonuclease that removes tRNA introns. Cleaves pre-tRNA at the 5'- and 3'-splice sites to release the intron. The products are an intron and two tRNA half-molecules bearing 2',3' cyclic phosphate and 5'-OH termini. Recognizes a pseudosymmetric substrate in which 2 bulged loops of 3 bases are separated by a stem of 4 bp. In Archaeoglobus fulgidus (strain ATCC 49558 / DSM 4304 / JCM 9628 / NBRC 100126 / VC-16), this protein is tRNA-splicing endonuclease.